The chain runs to 637 residues: tRNA uridine 5-carboxymethylaminomethyl modification enzyme MnmG (637 aa).

14-19 (GAGHAG) serves as a coordination point for FAD. 279-293 (GPRYCPSIEDKVVRF) contributes to the NAD(+) binding site.

It belongs to the MnmG family. As to quaternary structure, homodimer. Heterotetramer of two MnmE and two MnmG subunits. It depends on FAD as a cofactor.

The protein resides in the cytoplasm. Its function is as follows. NAD-binding protein involved in the addition of a carboxymethylaminomethyl (cmnm) group at the wobble position (U34) of certain tRNAs, forming tRNA-cmnm(5)s(2)U34. The polypeptide is tRNA uridine 5-carboxymethylaminomethyl modification enzyme MnmG (Desulfitobacterium hafniense (strain DSM 10664 / DCB-2)).